Consider the following 173-residue polypeptide: Co-chaperone protein HscB homolog (173 aa).

A J domain is found at 5-77 (CHYALFDLQP…PRRARYLLAI (73 aa)).

The protein belongs to the HscB family. In terms of assembly, interacts with HscA and stimulates its ATPase activity.

Its function is as follows. Co-chaperone involved in the maturation of iron-sulfur cluster-containing proteins. Seems to help targeting proteins to be folded toward HscA. The chain is Co-chaperone protein HscB homolog from Pseudomonas putida (strain GB-1).